Consider the following 175-residue polypeptide: Translation initiation factor IF-3 (175 aa).

It belongs to the IF-3 family. As to quaternary structure, monomer.

It is found in the cytoplasm. IF-3 binds to the 30S ribosomal subunit and shifts the equilibrium between 70S ribosomes and their 50S and 30S subunits in favor of the free subunits, thus enhancing the availability of 30S subunits on which protein synthesis initiation begins. This Chlamydia trachomatis serovar D (strain ATCC VR-885 / DSM 19411 / UW-3/Cx) protein is Translation initiation factor IF-3.